Here is a 315-residue protein sequence, read N- to C-terminus: Olfactory receptor 2V2 (315 aa).

Residues 1 to 26 are Extracellular-facing; that stretch reads METWVNQSYTDGFFLLGIFSHSTADL. N-linked (GlcNAc...) asparagine glycosylation is present at Asn-6. Residues 27–50 form a helical membrane-spanning segment; the sequence is VLFSVVMAVFTVALCGNVLLIFLI. The Cytoplasmic portion of the chain corresponds to 51–58; that stretch reads YMDPHLHT. A helical transmembrane segment spans residues 59-80; sequence PMYFFLSQLSLMDLMLVCTNVP. At 81 to 101 the chain is on the extracellular side; it reads KMAANFLSGRKSISFVGCGIQ. Residues Cys-98 and Cys-190 are joined by a disulfide bond. A helical transmembrane segment spans residues 102–121; the sequence is IGLFVCLVGSEGLLLGLMAY. Over 122 to 140 the chain is Cytoplasmic; sequence DRYVAISHPLHYPILMNQR. Residues 141–159 form a helical membrane-spanning segment; it reads VCLQITGSSWAFGIIDGLI. Residues 160–196 lie on the Extracellular side of the membrane; that stretch reads QMVVVMNFPYCGLRKVNHFFCEMLSLLKLACVDTSLF. The helical transmembrane segment at 197–220 threads the bilayer; that stretch reads EKVIFACCVFMLLFPFSIIVASYA. At 221-237 the chain is on the cytoplasmic side; that stretch reads HILGTVLQMHSAQAWKK. A helical transmembrane segment spans residues 238–260; the sequence is ALATCSSHLTAVTLFYGAAMFIY. The Extracellular portion of the chain corresponds to 261 to 273; it reads LRPRHYRAPSHDK. A helical membrane pass occupies residues 274–293; that stretch reads VASIFYTVLTPMLNPLIYSL. Topologically, residues 294–315 are cytoplasmic; that stretch reads RNREVMGALRKGLDRCRIGSQH.

This sequence belongs to the G-protein coupled receptor 1 family.

The protein localises to the cell membrane. Odorant receptor. The polypeptide is Olfactory receptor 2V2 (OR2V2) (Homo sapiens (Human)).